The following is a 489-amino-acid chain: MSKDAVDTAQVAAHPQATGTIPADAGDAGYSKDLKARHVNMIAIGGAIGTGLFLGAGGRLRDAGPALAIAYLVAGVFAFFVVKALGELVLYRPSSGSFVSYAREFLGEKGAYVAGWMYFLNWSTTGIADITAIALYTHYWSMFTSIPQWVLALVALAVVLAVNLISVKIFGEMEFWFAIVKVATLVGFMLIGIFLLATQHEVSGQTPGMGMITDHGGILPHGVMPVVLVMQGVIFSYAALELVGVAAGETAEPHKIVPRAVNSIMWRVALFYVGSVVLLALLLPSSLYSGDESPFVTVLSGIGVPAAGDVMNLVVLTAAMSSLNSGLYSTGRILRSMAMAGSAPRFTGVMSRSQVPYGGILLTCAVCVLGVGLNYLVPSKAFEIVLNVASLGIISTWVIIMICHLVFVRRARAGLVERPGFRLPGSPVTEIVTIAFLLAVVGLMWNDEEVGRKTVLLVPVIAVMLVAGWFGVRRRVAHQAGQERPAPRE.

The next 12 membrane-spanning stretches (helical) occupy residues His-38–Gly-58, Asp-62–Val-82, Val-113–Ile-133, Val-150–Phe-170, Phe-175–Leu-195, Val-223–Val-243, Val-268–Tyr-288, Ile-302–Ser-322, Tyr-357–Val-377, Phe-382–Ile-402, Ser-426–Asn-446, and Arg-452–Val-472.

This sequence belongs to the amino acid-polyamine-organocation (APC) superfamily. Amino acid transporter (AAT) (TC 2.A.3.1) family.

The protein localises to the cell membrane. This chain is L-asparagine permease (ansP), found in Streptomyces coelicolor (strain ATCC BAA-471 / A3(2) / M145).